A 372-amino-acid chain; its full sequence is Probable arabinan endo-1,5-alpha-L-arabinosidase B (372 aa).

The first 16 residues, M1 to C16, serve as a signal peptide directing secretion. Over residues S23–E34 the composition is skewed to low complexity. The tract at residues S23–A52 is disordered. D59 (proton acceptor) is an active-site residue. An N-linked (GlcNAc...) asparagine glycan is attached at N120. The Proton donor role is filled by E252. N363 carries N-linked (GlcNAc...) asparagine glycosylation.

It belongs to the glycosyl hydrolase 43 family.

Its subcellular location is the secreted. It catalyses the reaction Endohydrolysis of (1-&gt;5)-alpha-arabinofuranosidic linkages in (1-&gt;5)-arabinans.. The protein operates within glycan metabolism; L-arabinan degradation. Its function is as follows. Endo-1,5-alpha-L-arabinanase involved in degradation of pectin. Its preferred substrate is linear 1,5-alpha-L-arabinan. The polypeptide is Probable arabinan endo-1,5-alpha-L-arabinosidase B (abnB) (Aspergillus fumigatus (strain CBS 144.89 / FGSC A1163 / CEA10) (Neosartorya fumigata)).